The chain runs to 293 residues: MFLRRLGGWLPRPWGRKKSTKADLPAPEPRWVDSSPENSGSDWDSAPETMGDVGPLKTKDSGTRRPPGAAPESSRDLKVDQLGSKRMDSLKRDKTASTIQEPARLESGGAIPKLDWDPVDSGGVKNLGVSAQGRLGTIGPEALLEKPGRRQKLLRWLRGEPGAPSHYLQDPEEYLQISTNLTLHLLELLATALLALCSRPLRAILDALGLRGPVGLWLHGLLCFLAALHGLHAVLSLLTAHPLHFACLFGLLQALVLAVSLREPVEDEETADWESEGQEREAKEQREGPGRML.

Disordered regions lie at residues 1 to 114 (MFLR…IPKL) and 268 to 293 (EETADWESEGQEREAKEQREGPGRML). Phosphoserine is present on residues S34, S35, and S89. Composition is skewed to basic and acidic residues over residues 73–95 (SSRDLKVDQLGSKRMDSLKRDKT) and 277–293 (GQEREAKEQREGPGRML).

This is an uncharacterized protein from Mus musculus (Mouse).